The sequence spans 405 residues: MQGAFTDNTNNTGSEKETNVVIVRYGELALKSPGVRNWYEKILMKNIAAMLDSKNIPYSLMRREWGRIFIETTDPRAAGAAADVFGVVSTSSALITKPELDSAAETCAFLGKKIIQEGESFAIRARRSGNHSFSSADIGRACGDAVWNMLESEGKHPKVNLGSPDREIFVEMRQNLAYVYLETVKGVGGLPLGTQGKMVVLMSGGLDSPVAAWLMMKRGVMIIPVYCNTSPYAENAAKERAYDCIRQLQTWASGHQFTTYEIPHGPNLRSFIEMCDRKNTCLLCKRMMYREAYEIMKKEGASGIITGSSLGQVASQTAANMHAEIYQLAIPIYHPLIAFDKSEIIDIARKIGTYDISTRSAGSCTAVPERPEVKANYDLIVLEEKRLDIENMVSEALKAAKVLKL.

Residues 75 to 183 (PRAAGAAADV…QNLAYVYLET (109 aa)) form the THUMP domain. Residues 201-202 (LM), Lys-285, Gly-307, and Gln-316 contribute to the ATP site.

It belongs to the ThiI family.

It is found in the cytoplasm. The catalysed reaction is [ThiI sulfur-carrier protein]-S-sulfanyl-L-cysteine + a uridine in tRNA + 2 reduced [2Fe-2S]-[ferredoxin] + ATP + H(+) = [ThiI sulfur-carrier protein]-L-cysteine + a 4-thiouridine in tRNA + 2 oxidized [2Fe-2S]-[ferredoxin] + AMP + diphosphate. It carries out the reaction [ThiS sulfur-carrier protein]-C-terminal Gly-Gly-AMP + S-sulfanyl-L-cysteinyl-[cysteine desulfurase] + AH2 = [ThiS sulfur-carrier protein]-C-terminal-Gly-aminoethanethioate + L-cysteinyl-[cysteine desulfurase] + A + AMP + 2 H(+). The protein operates within cofactor biosynthesis; thiamine diphosphate biosynthesis. Functionally, catalyzes the ATP-dependent transfer of a sulfur to tRNA to produce 4-thiouridine in position 8 of tRNAs, which functions as a near-UV photosensor. Also catalyzes the transfer of sulfur to the sulfur carrier protein ThiS, forming ThiS-thiocarboxylate. This is a step in the synthesis of thiazole, in the thiamine biosynthesis pathway. The sulfur is donated as persulfide by IscS. The protein is Probable tRNA sulfurtransferase of Methanosarcina mazei (strain ATCC BAA-159 / DSM 3647 / Goe1 / Go1 / JCM 11833 / OCM 88) (Methanosarcina frisia).